The following is a 192-amino-acid chain: E3 ubiquitin-protein ligase RNF185 (192 aa).

Over residues 1 to 14 the composition is skewed to polar residues; sequence MASKGPSASASTEN. The disordered stretch occupies residues 1–30; that stretch reads MASKGPSASASTENSSAGGPSGSSNGTGES. Topologically, residues 1–130 are cytoplasmic; that stretch reads MASKGPSASA…GGFQGFGFGD (130 aa). Residues 15 to 27 are compositionally biased toward low complexity; that stretch reads SSAGGPSGSSNGT. The tract at residues 29–80 is required for ubiquitin ligase activity and protection against ER stress-induced cell death; it reads ESGGQDSTFECNICLDTAKDAVISLCGHLFCWPCLHQWLETRPNRQVCPVCK. An RING-type zinc finger spans residues 39–80; it reads CNICLDTAKDAVISLCGHLFCWPCLHQWLETRPNRQVCPVCK. Residues 90 to 123 form a disordered region; the sequence is PLYGRGSTGQQDPREKTPPRPQGQRPEPENRGGF. The helical transmembrane segment at 131–151 threads the bilayer; the sequence is GGFQMSFGIGAFPFGIFATAF. The Mitochondrial intermembrane portion of the chain corresponds to 152-171; sequence NINDGRPPPAVPGTPQYVDE. The chain crosses the membrane as a helical span at residues 172-192; it reads QFLSRLFLFVALVIMFWLLIA.

As to quaternary structure, interacts with ATG5 and BNIP1.

The protein resides in the mitochondrion outer membrane. It localises to the endoplasmic reticulum membrane. The catalysed reaction is S-ubiquitinyl-[E2 ubiquitin-conjugating enzyme]-L-cysteine + [acceptor protein]-L-lysine = [E2 ubiquitin-conjugating enzyme]-L-cysteine + N(6)-ubiquitinyl-[acceptor protein]-L-lysine.. The protein operates within protein modification; protein ubiquitination. E3 ubiquitin-protein ligase that regulates selective mitochondrial autophagy by mediating 'Lys-63'-linked polyubiquitination of BNIP1. Acts in the endoplasmic reticulum (ER)-associated degradation (ERAD) pathway, which targets misfolded proteins that accumulate in the endoplasmic reticulum (ER) for ubiquitination and subsequent proteasome-mediated degradation. Protects cells from ER stress-induced apoptosis. Responsible for the cotranslational ubiquitination and degradation of CFTR in the ERAD pathway. Also acts as a regulator of the innate antiviral response by catalyzing 'Lys-27'-linked polyubiquitination of CGAS, thereby promoting CGAS cyclic GMP-AMP synthase activity. Preferentially associates with the E2 enzymes UBE2J1 and UBE2J2. This Rattus norvegicus (Rat) protein is E3 ubiquitin-protein ligase RNF185 (Rnf185).